The sequence spans 671 residues: DNA ligase (671 aa).

NAD(+) contacts are provided by residues 32-36 (DAEYD), 81-82 (SL), and E113. K115 serves as the catalytic N6-AMP-lysine intermediate. The NAD(+) site is built by R136, E173, K290, and K314. Residues C408, C411, C426, and C432 each coordinate Zn(2+). The region spanning 593–671 (EIDSPFAGKT…ETEMLRLLGS (79 aa)) is the BRCT domain.

Belongs to the NAD-dependent DNA ligase family. LigA subfamily. Requires Mg(2+) as cofactor. Mn(2+) serves as cofactor.

It carries out the reaction NAD(+) + (deoxyribonucleotide)n-3'-hydroxyl + 5'-phospho-(deoxyribonucleotide)m = (deoxyribonucleotide)n+m + AMP + beta-nicotinamide D-nucleotide.. Its function is as follows. DNA ligase that catalyzes the formation of phosphodiester linkages between 5'-phosphoryl and 3'-hydroxyl groups in double-stranded DNA using NAD as a coenzyme and as the energy source for the reaction. It is essential for DNA replication and repair of damaged DNA. The polypeptide is DNA ligase (Escherichia coli O1:K1 / APEC).